The sequence spans 225 residues: RNA chaperone ProQ (225 aa).

The tract at residues 107-169 (KARVQAQRAA…VAAKAPREER (63 aa)) is disordered. Residues 109–118 (RVQAQRAAQQ) are compositionally biased toward low complexity. Basic residues predominate over residues 137 to 146 (RERKPRPQQP). Over residues 147–156 (RRKEGAEQRK) the composition is skewed to basic and acidic residues.

This sequence belongs to the ProQ family.

Its subcellular location is the cytoplasm. RNA chaperone with significant RNA binding, RNA strand exchange and RNA duplexing activities. May regulate ProP activity through an RNA-based, post-transcriptional mechanism. The polypeptide is RNA chaperone ProQ (Klebsiella pneumoniae subsp. pneumoniae (strain ATCC 700721 / MGH 78578)).